The chain runs to 637 residues: Epithelial sodium channel subunit alpha (637 aa).

Residues 1–34 (MGTASRGGSVKAEKMPEGEKTRQCKQETEQQQKE) form a disordered region. At 1-76 (MGTASRGGSV…VCSKKNKMKT (76 aa)) the chain is on the cytoplasmic side. Over residues 11–34 (KAEKMPEGEKTRQCKQETEQQQKE) the composition is skewed to basic and acidic residues. A helical membrane pass occupies residues 77-97 (AFWSVLFILTFGLMYWQFGIL). Over 98-548 (YREYFSYPVN…NQWSLWFGSS (451 aa)) the chain is Extracellular. 10 disulfides stabilise this stretch: C125–C292, C217–C224, C269–C276, C380–C465, C402–C442, C402–C461, C406–C457, C415–C442, C415–C465, and C417–C431. A helical transmembrane segment spans residues 549–569 (VLSVMELAELILDFTVITFIL). Topologically, residues 570–637 (AFRWFRSKQW…PSKDGETGLE (68 aa)) are cytoplasmic.

Belongs to the amiloride-sensitive sodium channel (TC 1.A.6) family. SCNN1A subfamily. As to quaternary structure, heterotrimer; containing an alpha/SCNN1A, a beta/SCNN1B and a gamma/SCNN1G subunit. The long isoform has been found in cochlea, colon, and cartilage. The short isoform is only found in cochlea.

Its subcellular location is the apical cell membrane. The protein localises to the cell projection. The protein resides in the cilium. It is found in the cytoplasmic granule. It localises to the cytoplasm. Its subcellular location is the cytoplasmic vesicle. The protein localises to the secretory vesicle. The protein resides in the acrosome. It is found in the flagellum. It carries out the reaction Na(+)(in) = Na(+)(out). With respect to regulation, originally identified and characterized by its inhibition by the diuretic drug amiloride. Its function is as follows. This is one of the three pore-forming subunits of the heterotrimeric epithelial sodium channel (ENaC), a critical regulator of sodium balance and fluid homeostasis. ENaC operates in epithelial tissues, where it mediates the electrodiffusion of sodium ions from extracellular fluid through the apical membrane of cells, with water following osmotically. The chain is Epithelial sodium channel subunit alpha from Gallus gallus (Chicken).